A 155-amino-acid chain; its full sequence is Ribosomal RNA large subunit methyltransferase H (155 aa).

S-adenosyl-L-methionine is bound by residues Leu72, Gly103, and 122 to 127 (LSPLTL).

This sequence belongs to the RNA methyltransferase RlmH family. Homodimer.

It is found in the cytoplasm. It catalyses the reaction pseudouridine(1915) in 23S rRNA + S-adenosyl-L-methionine = N(3)-methylpseudouridine(1915) in 23S rRNA + S-adenosyl-L-homocysteine + H(+). Functionally, specifically methylates the pseudouridine at position 1915 (m3Psi1915) in 23S rRNA. This Haemophilus influenzae (strain PittGG) protein is Ribosomal RNA large subunit methyltransferase H.